A 217-amino-acid polypeptide reads, in one-letter code: Pre-mRNA-splicing factor sap62 (217 aa).

The segment at 54–84 adopts a Matrin-type zinc-finger fold; it reads FECRLCLTTHANENSYLTHTQGKKHQTNLAR.

Belongs to the SF3A2 family. As to quaternary structure, belongs to the 40S cdc5-associated complex (or cwf complex), a spliceosome sub-complex reminiscent of a late-stage spliceosome composed of the U2, U5 and U6 snRNAs and at least brr2, cdc5, cwf2/prp3, cwf3/syf1, cwf4/syf3, cwf5/ecm2, spp42/cwf6, cwf7/spf27, cwf8, cwf9, cwf10, cwf11, cwf12, prp45/cwf13, cwf14, cwf15, cwf16, cwf17, cwf18, cwf19, cwf20, cwf21, cwf22, cwf23, cwf24, cwf25, cwf26, cyp7/cwf27, cwf28, cwf29/ist3, lea1, msl1, prp5/cwf1, prp10, prp12/sap130, prp17, prp22, sap61, sap62, sap114, sap145, slu7, smb1, smd1, smd3, smf1, smg1 and syf2.

It localises to the nucleus. It is found in the cytoplasm. Functionally, involved in mRNA splicing where it associates with cdc5 and the other cwf proteins as part of the spliceosome. The sequence is that of Pre-mRNA-splicing factor sap62 (sap62) from Schizosaccharomyces pombe (strain 972 / ATCC 24843) (Fission yeast).